The following is a 319-amino-acid chain: Probable cell division protein WhiA (319 aa).

Positions 278-311 (SLKELGQMLNPPVGKSGVNHRLRRLESLAEAFSR) form a DNA-binding region, H-T-H motif.

The protein belongs to the WhiA family.

In terms of biological role, involved in cell division and chromosome segregation. The sequence is that of Probable cell division protein WhiA from Heliobacterium modesticaldum (strain ATCC 51547 / Ice1).